Reading from the N-terminus, the 233-residue chain is Small heat shock protein hspF (233 aa).

Positions 129–233 (IPLFTFFEPL…ILLITVNKFL (105 aa)) constitute a sHSP domain.

The protein belongs to the small heat shock protein (HSP20) family.

The protein is Small heat shock protein hspF (hspF-1) of Dictyostelium discoideum (Social amoeba).